The chain runs to 260 residues: Small ribosomal subunit protein uS2 (260 aa).

This sequence belongs to the universal ribosomal protein uS2 family.

The polypeptide is Small ribosomal subunit protein uS2 (Streptococcus gordonii (strain Challis / ATCC 35105 / BCRC 15272 / CH1 / DL1 / V288)).